A 151-amino-acid polypeptide reads, in one-letter code: Decarboxylase nsrE (151 aa).

Positions 31–126 (AGMTEEDYHN…VGDHENFADT (96 aa)) constitute an EthD domain.

The protein belongs to the tpcK family.

The catalysed reaction is atrochrysone carboxylate + H(+) = atrochrysone + CO2. It participates in secondary metabolite biosynthesis. Functionally, decarboxylase; part of the gene cluster that mediates the biosynthesis of the tetrahydroxanthone dimer neosartorin, which exhibits antibacterial activity. The two different monomeric units appear to be synthesized by the same set of enzymes, among which the Baeyer-Villiger monooxygenase nsrF is the key enzyme for the divergence of the biosynthetic routes. The pathway begins with the synthesis of atrochrysone thioester by the polyketide synthase nsrB. The atrochrysone carboxyl ACP thioesterase nsrC then breaks the thioester bond and releases the atrochrysone carboxylic acid from AacuL. Atrochrysone carboxylic acid is decarboxylated by the decarboxylase nsrE, and oxidized by the anthrone oxygenase nsrD to yield emodin. Emodin is then reduced to emodin hydroquinone by the oxidoreductase nsrR. A-ring reduction by the short chain dehydrogenase nsrJ, dehydration by the scytalone dehydratase-like protein nsrI and probable spontaneous re-oxidation, results in overall deoxygenation to chrysophanol. The Baeyer-Villiger monooxygenase nsrF accepts chrysophanol as a substrate to insert one oxygen atom at two different positions to yield the precursors of both monomric units. NsrF is promiscuous/flexible in interacting with the 2 (non methylated and methylated) aromatic rings of chrysophanol, thus diverging the biosynthetic pathway at this point. After the hydrolysis of the lactones, methylesterification by the methyltransferase nsrG yields respectively moniliphenone and 2,2',6'-trihydroxy-4-methyl-6-methoxya-cyldiphenylmethanone. The next steps are the hydroxylation by the FAD-dependent monooxygenase nsrK, followed by isomerization by the monooxygenase nsrQ. The short chain dehydrogenase/reductase nsrO then catalyzes the C-5 ketoreduction to give the xanthone skeleton of blennolide C and 5-acetylblennolide A. The acetyltransferase nsrL has a strict substrate specificity and uses only blennolide A but not blennolide C to yield 5-acetylblennolide A as the single-acetylated product. In the final step of the biosynthesis, the heterodimerization of the 2 xanthones, blennolide C and 5-acetylblennolide A, is catalyzed by the cytochrome P450 monooxygenase nsrP. NsrP can utilize at least three different xanthones as its substrates to perform the dimerization reaction. The sequence is that of Decarboxylase nsrE from Aspergillus novofumigatus (strain IBT 16806).